The chain runs to 115 residues: Ig heavy chain V-III region J606 (115 aa).

The Ig-like domain maps to 1-114 (EVKLEESGGG…WGQGTLVTVS (114 aa)). A disulfide bridge connects residues cysteine 22 and cysteine 98.

The protein is Ig heavy chain V-III region J606 of Mus musculus (Mouse).